A 96-amino-acid chain; its full sequence is Co-chaperonin GroES (96 aa).

This sequence belongs to the GroES chaperonin family. In terms of assembly, heptamer of 7 subunits arranged in a ring. Interacts with the chaperonin GroEL.

It is found in the cytoplasm. In terms of biological role, together with the chaperonin GroEL, plays an essential role in assisting protein folding. The GroEL-GroES system forms a nano-cage that allows encapsulation of the non-native substrate proteins and provides a physical environment optimized to promote and accelerate protein folding. GroES binds to the apical surface of the GroEL ring, thereby capping the opening of the GroEL channel. The chain is Co-chaperonin GroES from Myxococcus xanthus (strain DK1622).